The primary structure comprises 904 residues: Myelin regulatory factor-like protein (904 aa).

Residues 46–132 (LQRQLPDTPP…ATCRHQTGPS (87 aa)) are disordered. Residues 100 to 117 (PSQSMAGQTHSSFQNGYP) show a composition bias toward polar residues. Positions 108–400 (THSSFQNGYP…SNPGQFENDS (293 aa)) form a DNA-binding region, NDT80. Residues 446–554 (SDSRVKENIQ…KLTNNLEERI (109 aa)) form the Peptidase S74 domain. A coiled-coil region spans residues 538–575 (GAVKQLCKLTNNLEERIEELEIWNKKLARLKRLSSSWK). A helical membrane pass occupies residues 624–644 (LVVVLIAVMAFCALTIVALYI). The segment at 656–688 (NLPLSNMTSSPEPALSSTAPTSAPHTTPETTQT) is disordered. Low complexity predominate over residues 663 to 688 (TSSPEPALSSTAPTSAPHTTPETTQT).

Belongs to the MRF family.

Its subcellular location is the membrane. The sequence is that of Myelin regulatory factor-like protein (Myrfl) from Mus musculus (Mouse).